Here is a 158-residue protein sequence, read N- to C-terminus: NADPH-dependent 7-cyano-7-deazaguanine reductase (158 aa).

Cys56 serves as the catalytic Thioimide intermediate. Asp63 (proton donor) is an active-site residue. Substrate contacts are provided by residues 78-80 and 97-98; these read LES and HE.

The protein belongs to the GTP cyclohydrolase I family. QueF type 1 subfamily.

The protein resides in the cytoplasm. It catalyses the reaction 7-aminomethyl-7-carbaguanine + 2 NADP(+) = 7-cyano-7-deazaguanine + 2 NADPH + 3 H(+). It functions in the pathway tRNA modification; tRNA-queuosine biosynthesis. Its function is as follows. Catalyzes the NADPH-dependent reduction of 7-cyano-7-deazaguanine (preQ0) to 7-aminomethyl-7-deazaguanine (preQ1). In Rhodopseudomonas palustris (strain TIE-1), this protein is NADPH-dependent 7-cyano-7-deazaguanine reductase.